A 351-amino-acid polypeptide reads, in one-letter code: Nicotinate-nucleotide--dimethylbenzimidazole phosphoribosyltransferase (351 aa).

Glutamate 317 serves as the catalytic Proton acceptor.

The protein belongs to the CobT family.

The enzyme catalyses 5,6-dimethylbenzimidazole + nicotinate beta-D-ribonucleotide = alpha-ribazole 5'-phosphate + nicotinate + H(+). It functions in the pathway nucleoside biosynthesis; alpha-ribazole biosynthesis; alpha-ribazole from 5,6-dimethylbenzimidazole: step 1/2. Catalyzes the synthesis of alpha-ribazole-5'-phosphate from nicotinate mononucleotide (NAMN) and 5,6-dimethylbenzimidazole (DMB). The polypeptide is Nicotinate-nucleotide--dimethylbenzimidazole phosphoribosyltransferase (Pseudomonas aeruginosa (strain LESB58)).